The chain runs to 382 residues: Mannitol-1-phosphate 5-dehydrogenase (382 aa).

3 to 14 (ALHFGAGNIGRG) contacts NAD(+).

It belongs to the mannitol dehydrogenase family.

It carries out the reaction D-mannitol 1-phosphate + NAD(+) = beta-D-fructose 6-phosphate + NADH + H(+). This is Mannitol-1-phosphate 5-dehydrogenase from Salmonella newport (strain SL254).